A 433-amino-acid chain; its full sequence is Glucoside xylosyltransferase 1 (433 aa).

The Cytoplasmic portion of the chain corresponds to 1-6; the sequence is MRRFAR. The chain crosses the membrane as a helical; Signal-anchor for type II membrane protein span at residues 7–29; sequence VALLFLGCGVCSLLYGVSQLALS. Topologically, residues 30–433 are lumenal; sequence LEQEAGGARQ…DLSVRRSKGS (404 aa). The tract at residues 39–64 is disordered; sequence QRQARESAAPGGGRQAGSADGGEEGA. N69, N166, N271, N305, and N380 each carry an N-linked (GlcNAc...) asparagine glycan.

This sequence belongs to the glycosyltransferase 8 family.

The protein localises to the membrane. It catalyses the reaction 3-O-(beta-D-glucosyl)-L-seryl-[EGF-like domain protein] + UDP-alpha-D-xylose = 3-O-[alpha-D-xylosyl-(1-&gt;3)-beta-D-glucosyl]-L-seryl-[EGF-like domain protein] + UDP + H(+). Functionally, glycosyltransferase which elongates the O-linked glucose attached to EGF-like repeats in the extracellular domain of Notch proteins by catalyzing the addition of xylose. The protein is Glucoside xylosyltransferase 1 (GXYLT1) of Gallus gallus (Chicken).